Here is a 759-residue protein sequence, read N- to C-terminus: uncharacterized protein (759 aa).

3 stretches are compositionally biased toward low complexity: residues 1-36 (MSSN…NETN), 142-211 (QQQN…NQHH), and 221-347 (NHSN…GSSS). 5 disordered regions span residues 1 to 47 (MSSN…AQTP), 142 to 380 (QQQN…PSIG), 409 to 428 (NNNC…GLGY), 463 to 504 (IING…NFEN), and 654 to 759 (LVDD…YLNK). Polar residues predominate over residues 348 to 360 (PFQDQARSPSSSF). Low complexity-rich tracts occupy residues 463–495 (IING…GNNN) and 660–747 (HISN…DNNN).

This is an uncharacterized protein from Dictyostelium discoideum (Social amoeba).